The following is a 339-amino-acid chain: 7,8-didemethyl-8-hydroxy-5-deazariboflavin synthase (339 aa).

In terms of domain architecture, Radical SAM core spans 25-256; the sequence is ATYSPAYTIV…PDITIQIPPN (232 aa). [4Fe-4S] cluster contacts are provided by cysteine 39, cysteine 43, and cysteine 46.

Belongs to the radical SAM superfamily. CofG family. As to quaternary structure, consists of two subunits, CofG and CofH. Requires [4Fe-4S] cluster as cofactor.

The enzyme catalyses 5-amino-5-(4-hydroxybenzyl)-6-(D-ribitylimino)-5,6-dihydrouracil + S-adenosyl-L-methionine = 7,8-didemethyl-8-hydroxy-5-deazariboflavin + 5'-deoxyadenosine + L-methionine + NH4(+) + H(+). It participates in cofactor biosynthesis; coenzyme F0 biosynthesis. Functionally, catalyzes the radical-mediated synthesis of 7,8-didemethyl-8-hydroxy-5-deazariboflavin from 5-amino-5-(4-hydroxybenzyl)-6-(D-ribitylimino)-5,6-dihydrouracil. This is 7,8-didemethyl-8-hydroxy-5-deazariboflavin synthase from Nostoc sp. (strain PCC 7120 / SAG 25.82 / UTEX 2576).